We begin with the raw amino-acid sequence, 24 residues long: Superoxide dismutase [Cu-Zn] (24 aa).

It belongs to the Cu-Zn superoxide dismutase family. Homodimer. The cofactor is Cu cation. Zn(2+) is required as a cofactor.

It localises to the cytoplasm. It catalyses the reaction 2 superoxide + 2 H(+) = H2O2 + O2. Its function is as follows. Destroys radicals which are normally produced within the cells and which are toxic to biological systems. This Aquarana catesbeiana (American bullfrog) protein is Superoxide dismutase [Cu-Zn] (sod1).